The sequence spans 427 residues: 3-phosphoshikimate 1-carboxyvinyltransferase (427 aa).

3-phosphoshikimate-binding residues include Lys-20, Ser-21, and Arg-25. Lys-20 is a binding site for phosphoenolpyruvate. Phosphoenolpyruvate contacts are provided by Gly-92 and Arg-120. 4 residues coordinate 3-phosphoshikimate: Ser-166, Gln-168, Asp-312, and Lys-339. Gln-168 contacts phosphoenolpyruvate. The active-site Proton acceptor is the Asp-312. 2 residues coordinate phosphoenolpyruvate: Arg-343 and Arg-385.

This sequence belongs to the EPSP synthase family. As to quaternary structure, monomer.

It localises to the cytoplasm. It carries out the reaction 3-phosphoshikimate + phosphoenolpyruvate = 5-O-(1-carboxyvinyl)-3-phosphoshikimate + phosphate. It functions in the pathway metabolic intermediate biosynthesis; chorismate biosynthesis; chorismate from D-erythrose 4-phosphate and phosphoenolpyruvate: step 6/7. Functionally, catalyzes the transfer of the enolpyruvyl moiety of phosphoenolpyruvate (PEP) to the 5-hydroxyl of shikimate-3-phosphate (S3P) to produce enolpyruvyl shikimate-3-phosphate and inorganic phosphate. The chain is 3-phosphoshikimate 1-carboxyvinyltransferase from Streptococcus agalactiae serotype Ia (strain ATCC 27591 / A909 / CDC SS700).